Reading from the N-terminus, the 210-residue chain is MLKSVGVILVLSSPSGCGKTTVANKLLEKQKNNIVKSVSVTTRAARKGEKEGKDYYFVDREEFLRLCSNGEIIEHAEVFGNFYGVPRKNLEDNVDKGVSTLLVIDWQGAFKFMEMMREHVVSIFIMPPSMEELRRRLCGRRADDSEVVEARLKGAAFEISHCEAYDYVIVNEDIEETADRISNILRAEQMKTCRQVGLRELLESRFPIED.

In terms of domain architecture, Guanylate kinase-like spans 6 to 186; it reads GVILVLSSPS…TADRISNILR (181 aa). Position 13–20 (13–20) interacts with ATP; it reads SPSGCGKT.

It belongs to the guanylate kinase family.

It localises to the cytoplasm. It carries out the reaction GMP + ATP = GDP + ADP. Functionally, essential for recycling GMP and indirectly, cGMP. The polypeptide is Guanylate kinase (Anaplasma phagocytophilum (strain HZ)).